A 614-amino-acid chain; its full sequence is Putative binding protein BMEII0691 (614 aa).

The first 28 residues, 1–28, serve as a signal peptide directing secretion; that stretch reads MNRFIAFFRSVFLIGLVATAFGALPARA.

Belongs to the bacterial solute-binding protein 5 family.

The protein localises to the periplasm. The polypeptide is Putative binding protein BMEII0691 (Brucella melitensis biotype 1 (strain ATCC 23456 / CCUG 17765 / NCTC 10094 / 16M)).